A 324-amino-acid chain; its full sequence is Polyketide biosynthesis acyltransferase homolog PksD (324 aa).

The active site involves S99.

The protein localises to the cytoplasm. It functions in the pathway antibiotic biosynthesis; bacillaene biosynthesis. Probably involved in some intermediate steps for the synthesis of the antibiotic polyketide bacillaene which is involved in secondary metabolism. This chain is Polyketide biosynthesis acyltransferase homolog PksD (pksD), found in Bacillus subtilis (strain 168).